The sequence spans 76 residues: ATP synthase subunit 9, mitochondrial (76 aa).

2 helical membrane passes run 10–30 and 52–72; these read IGAGISTIGLLGAGIGIAIVF and ILGFALSEATGLFCLMISFLL.

It belongs to the ATPase C chain family. In terms of assembly, F-type ATPases have 2 components, CF(1) - the catalytic core - and CF(0) - the membrane proton channel. CF(1) has five subunits: alpha(3), beta(3), gamma(1), delta(1), epsilon(1). CF(0) has three main subunits: a, b and c.

The protein localises to the mitochondrion membrane. In terms of biological role, mitochondrial membrane ATP synthase (F(1)F(0) ATP synthase or Complex V) produces ATP from ADP in the presence of a proton gradient across the membrane which is generated by electron transport complexes of the respiratory chain. F-type ATPases consist of two structural domains, F(1) - containing the extramembraneous catalytic core and F(0) - containing the membrane proton channel, linked together by a central stalk and a peripheral stalk. During catalysis, ATP synthesis in the catalytic domain of F(1) is coupled via a rotary mechanism of the central stalk subunits to proton translocation. Part of the complex F(0) domain. A homomeric c-ring of probably 10 subunits is part of the complex rotary element. In Kluyveromyces lactis (strain ATCC 8585 / CBS 2359 / DSM 70799 / NBRC 1267 / NRRL Y-1140 / WM37) (Yeast), this protein is ATP synthase subunit 9, mitochondrial (ATP9).